The following is a 65-amino-acid chain: Metallothionein-like protein 3B (65 aa).

This sequence belongs to the metallothionein superfamily. Type 15 family.

In terms of biological role, metallothioneins have a high content of cysteine residues that bind various heavy metals. The chain is Metallothionein-like protein 3B (MT3B) from Oryza sativa subsp. indica (Rice).